The chain runs to 223 residues: MEDVKLEFPSLPQCKDDAEEWTYPMRREMQEVLPGLFLGPYSSAMKSKLPILQKHGITHIICIRQNIEANFIKPNFQQLFRYLVLDIADNPVENIIRFFPMTKEFIDGSLQNGGKVLVHGNAGISRSAAFVIAYIMETFGMKYRDAFAYVQERRFCINPNAGFVHQLQEYEAIYLAKLTIQMMSPLQIERSLAVHSGTTGSVKRTHEEDDDFGNMQVATAQNG.

Residues 28–176 (EMQEVLPGLF…LQEYEAIYLA (149 aa)) form the Tyrosine-protein phosphatase domain. The Interaction with FBXW7 signature appears at 76–78 (FQQ). Phosphoserine occurs at positions 184 and 201. The tract at residues 199 to 223 (TGSVKRTHEEDDDFGNMQVATAQNG) is disordered.

The protein belongs to the protein-tyrosine phosphatase family. Non-receptor class subfamily. As to quaternary structure, interacts with MAPK1; independently of MAPK1 phosphorylation status. Interacts with CARHSP1/Crhsp-24. Interacts (via FQQ motif) with FBXW7 (via F-box domain); the interaction is direct and prevents FBXW7 interaction with SKP1, a component of the SCF(FBXW7) complex. In terms of tissue distribution, widely expressed with highest levels in muscle, testis and brain. In testis, expression starts 13-14 days after birth and is limited to the seminiferous tubule and to round and elongating spermatids. Expression is low in condensing spermatids and pachytene spermatocytes, and absent in spermatogonia, spermatozoa and somatic Sertoli cells.

It localises to the nucleus. The protein localises to the cytoplasm. Its subcellular location is the cytosol. Functionally, catalytically inactive phosphatase. Acts as a nuclear anchor for MAPK1/MAPK3 (ERK1/ERK2). Modulates cell-fate decisions and cell migration by spatiotemporal regulation of MAPK1/MAPK3 (ERK1/ERK2). By binding to the F-box of FBXW7, prevents the assembly of FBXW7 into the SCF E3 ubiquitin-protein ligase complex, and thereby inhibits degradation of its substrates. Plays a role in spermatogenesis. The sequence is that of Serine/threonine/tyrosine-interacting protein from Mus musculus (Mouse).